The primary structure comprises 1610 residues: NHS-like protein 1 (1610 aa).

At Ser-24 the chain carries Phosphoserine. The tract at residues 145-169 is disordered; that stretch reads SPFCDDYQDEDEETDQKCSLSSSEE. Phosphoserine is present on residues Ser-198 and Ser-328. The span at 433–448 shows a compositional bias: polar residues; the sequence is TAQSAGQRESKSSGSS. Disordered regions lie at residues 433 to 477 and 531 to 602; these read TAQS…HWNE and PAHP…DAGS. Ser-568 carries the phosphoserine modification. The span at 578–594 shows a compositional bias: polar residues; sequence GYSTPTSNMSSCSLDQT. Residue Ser-639 is modified to Phosphoserine. A compositionally biased stretch (polar residues) spans 649–667; it reads QKNQGDRSNYQDKSLSRNI. 5 disordered regions span residues 649–693, 715–778, 791–981, 997–1535, and 1566–1610; these read QKNQ…KKSS, SLPG…SVKS, TGMQ…PPPE, PRPA…GEGE, and EGGL…SEES. The span at 715–730 shows a compositional bias: low complexity; that stretch reads SLPGKSGSSPSQSPCS. Polar residues-rich tracts occupy residues 740–760, 767–778, and 851–865; these read SRSQSTVSAGSSMTSATTPNV, TPSQSDTSSVKS, and SPSSGYSSQSNTPTA. Positions 895 to 928 are enriched in low complexity; it reads SLISSVSISSSSTSLSSSTSTEGSGTMKKLDPAV. 2 stretches are compositionally biased toward pro residues: residues 929–946 and 970–981; these read GSPPAPPPPPVPSPPFPC and PHSPVFPPPPPE. Residues 1001–1011 show a composition bias toward low complexity; the sequence is LSPILPDSPVS. Positions 1012-1031 are enriched in pro residues; the sequence is LPLPPPLLPSSEPPPAPPLD. Polar residues predominate over residues 1041–1053; that stretch reads PFTNSGQPESSRG. Position 1089 is a phosphoserine (Ser-1089). Over residues 1122–1153 the composition is skewed to polar residues; it reads SRNSTNEMESESQPASVTSSLPTPAKSSSQGD. The residue at position 1167 (Ser-1167) is a Phosphoserine. Residues 1180–1193 are compositionally biased toward low complexity; the sequence is PSPSTTPLPDSSPS. Ser-1233 carries the post-translational modification Phosphoserine. 2 stretches are compositionally biased toward basic and acidic residues: residues 1240–1249 and 1373–1383; these read GSVHSREAKE and GRRDSDDDHSR. 2 positions are modified to phosphoserine: Ser-1386 and Ser-1388. Thr-1392 is subject to Phosphothreonine. Over residues 1405–1422 the composition is skewed to polar residues; the sequence is QVGSIQRSIRKSSTSSDN. Residues 1447-1460 are compositionally biased toward basic and acidic residues; that stretch reads KNTDPRFQRSRSEP. Low complexity-rich tracts occupy residues 1461–1474 and 1504–1516; these read SPDAPESPSSCSPS and SRTPPSAASSRYS.

It belongs to the NHS family. Widely expressed. Expressed in adult and fetal brain, fetal eyes, adult lens, kidney, liver and intestine.

The sequence is that of NHS-like protein 1 (NHSL1) from Homo sapiens (Human).